A 372-amino-acid chain; its full sequence is Queuine tRNA-ribosyltransferase (372 aa).

The active-site Proton acceptor is the Asp89. Substrate-binding positions include Asp89–Phe93, Asp143, Gln185, and Gly212. The RNA binding stretch occupies residues Gly243–Asp249. Asp262 serves as the catalytic Nucleophile. Residues Thr267–Arg271 are RNA binding; important for wobble base 34 recognition. Cys300, Cys302, Cys305, and His331 together coordinate Zn(2+).

It belongs to the queuine tRNA-ribosyltransferase family. Homodimer. Within each dimer, one monomer is responsible for RNA recognition and catalysis, while the other monomer binds to the replacement base PreQ1. It depends on Zn(2+) as a cofactor.

The enzyme catalyses 7-aminomethyl-7-carbaguanine + guanosine(34) in tRNA = 7-aminomethyl-7-carbaguanosine(34) in tRNA + guanine. It participates in tRNA modification; tRNA-queuosine biosynthesis. In terms of biological role, catalyzes the base-exchange of a guanine (G) residue with the queuine precursor 7-aminomethyl-7-deazaguanine (PreQ1) at position 34 (anticodon wobble position) in tRNAs with GU(N) anticodons (tRNA-Asp, -Asn, -His and -Tyr). Catalysis occurs through a double-displacement mechanism. The nucleophile active site attacks the C1' of nucleotide 34 to detach the guanine base from the RNA, forming a covalent enzyme-RNA intermediate. The proton acceptor active site deprotonates the incoming PreQ1, allowing a nucleophilic attack on the C1' of the ribose to form the product. After dissociation, two additional enzymatic reactions on the tRNA convert PreQ1 to queuine (Q), resulting in the hypermodified nucleoside queuosine (7-(((4,5-cis-dihydroxy-2-cyclopenten-1-yl)amino)methyl)-7-deazaguanosine). The chain is Queuine tRNA-ribosyltransferase from Pseudomonas aeruginosa (strain LESB58).